Consider the following 407-residue polypeptide: Lysosomal phospholipase A and acyltransferase (407 aa).

The first 29 residues, 1-29, serve as a signal peptide directing secretion; sequence MGCLCLYRSTLLTGGLLFLLMLADPAFPA. Aspartate 41 is a substrate binding site. Cysteine 60 and cysteine 84 are joined by a disulfide. N-linked (GlcNAc...) asparagine glycosylation is present at asparagine 94. Catalysis depends on serine 193, which acts as the Acyl-ester intermediate. Residue serine 193 participates in Zn(2+) binding. Methionine 194 is a binding site for substrate. Asparagine 284 carries an N-linked (GlcNAc...) asparagine glycan. Catalysis depends on charge relay system residues aspartate 355 and histidine 387. A Zn(2+)-binding site is contributed by histidine 387. A glycan (N-linked (GlcNAc...) asparagine) is linked at asparagine 393.

This sequence belongs to the AB hydrolase superfamily. Lipase family. In terms of processing, N-glycosylated. Post-translationally, N-glycosylated. N-glycosylation is important for maturation of the enzyme and normal subcellular location. As to expression, detected in brain (at protein level).

The protein localises to the lysosome. The protein resides in the secreted. It localises to the membrane. The enzyme catalyses a 1,2-diacyl-sn-glycero-3-phosphocholine + H2O = a 2-acyl-sn-glycero-3-phosphocholine + a fatty acid + H(+). It carries out the reaction 1-hexadecanoyl-2-(9Z-octadecenoyl)-sn-glycero-3-phosphocholine + H2O = 2-(9Z-octadecenoyl)-sn-glycero-3-phosphocholine + hexadecanoate + H(+). The catalysed reaction is 1,2-di-(9Z-octadecenoyl)-sn-glycero-3-phosphocholine + H2O = 2-(9Z-octadecenoyl)-sn-glycero-3-phosphocholine + (9Z)-octadecenoate + H(+). It catalyses the reaction 1-hexadecanoyl-2-glutaroyl-sn-glycero-3-phosphocholine + H2O = 2-glutaroyl-sn-glycero-3-phosphocholine + hexadecanoate + H(+). The enzyme catalyses 1-hexadecanoyl-2-nonadioyl-sn-glycero-3-phosphocholine + H2O = 2-nonadioyl-sn-glycero-3-phosphocholine + hexadecanoate + H(+). It carries out the reaction 1-hexadecanoyl-2-(5-oxopentanoyl)-sn-glycero-3-phosphocholine + H2O = 2-(5-oxopentanoyl)-sn-glycero-3-phosphocholine + hexadecanoate + H(+). The catalysed reaction is 1-hexadecanoyl-2-(9-oxononanoyl)-sn-glycero-3-phosphocholine + H2O = 2-(9-oxononanoyl)-sn-glycero-3-phosphocholine + hexadecanoate + H(+). It catalyses the reaction 1,2-dihexadecanoyl-sn-glycero-3-phosphocholine + H2O = 2-hexadecanoyl-sn-glycero-3-phosphocholine + hexadecanoate + H(+). The enzyme catalyses a 1,2-diacyl-sn-glycero-3-phosphocholine + H2O = a 1-acyl-sn-glycero-3-phosphocholine + a fatty acid + H(+). It carries out the reaction 1-hexadecanoyl-2-(9Z-octadecenoyl)-sn-glycero-3-phosphocholine + H2O = 1-hexadecanoyl-sn-glycero-3-phosphocholine + (9Z)-octadecenoate + H(+). The catalysed reaction is 1,2-di-(9Z-octadecenoyl)-sn-glycero-3-phosphocholine + H2O = 1-(9Z-octadecenoyl)-sn-glycero-3-phosphocholine + (9Z)-octadecenoate + H(+). It catalyses the reaction 1,2-dihexadecanoyl-sn-glycero-3-phosphocholine + H2O = 1-hexadecanoyl-sn-glycero-3-phosphocholine + hexadecanoate + H(+). The enzyme catalyses a 1-acyl-sn-glycero-3-phosphocholine + H2O = sn-glycerol 3-phosphocholine + a fatty acid + H(+). It carries out the reaction 1-hexadecanoyl-sn-glycero-3-phosphocholine + H2O = sn-glycerol 3-phosphocholine + hexadecanoate + H(+). The catalysed reaction is N-(acetyl)-sphing-4-enine + a 1,2-diacyl-sn-glycero-3-phosphoethanolamine = 1-O-acyl-N-(acetyl)-sphing-4-enine + a 2-acyl-sn-glycero-3-phosphoethanolamine. It catalyses the reaction 1-hexadecanoyl-2-(9Z-octadecenoyl)-sn-glycero-3-phosphoethanolamine + N-(acetyl)-sphing-4-enine = 2-(9Z-octadecenoyl)-sn-glycero-3-phosphoethanolamine + 1-hexadecanoyl-N-(acetyl)-sphing-4-enine. The enzyme catalyses 1-hexadecanoyl-2-(9Z,12Z-octadecadienoyl)-sn-glycero-3-phosphoethanolamine + N-(acetyl)-sphing-4-enine = 2-(9Z,12Z)-octadecadienoyl-sn-glycero-3-phosphoethanolamine + 1-hexadecanoyl-N-(acetyl)-sphing-4-enine. It carries out the reaction 1-hexadecanoyl-2-(5Z,8Z,11Z,14Z-eicosatetraenoyl)-sn-glycero-3-phosphoethanolamine + N-(acetyl)-sphing-4-enine = 2-(5Z,8Z,11Z,14Z)-eicosatetraenoyl-sn-glycero-3-phosphoethanolamine + 1-hexadecanoyl-N-(acetyl)-sphing-4-enine. The catalysed reaction is N-(acetyl)-sphing-4-enine + a 1,2-diacyl-sn-glycero-3-phosphoethanolamine = 1-O-acyl-N-(acetyl)-sphing-4-enine + a 1-acyl-sn-glycero-3-phosphoethanolamine. It catalyses the reaction 1-hexadecanoyl-2-(9Z-octadecenoyl)-sn-glycero-3-phosphoethanolamine + N-(acetyl)-sphing-4-enine = 1-(9Z-octadecenoyl)-N-(acetyl)-sphing-4-enine + 1-hexadecanoyl-sn-glycero-3-phosphoethanolamine. The enzyme catalyses 1-hexadecanoyl-2-(9Z,12Z-octadecadienoyl)-sn-glycero-3-phosphoethanolamine + N-(acetyl)-sphing-4-enine = 1-(9Z,12Z-octadecadienoyl)-N-acetylsphing-4-enine + 1-hexadecanoyl-sn-glycero-3-phosphoethanolamine. It carries out the reaction 1-hexadecanoyl-2-(5Z,8Z,11Z,14Z-eicosatetraenoyl)-sn-glycero-3-phosphoethanolamine + N-(acetyl)-sphing-4-enine = 1-(5Z,8Z,11Z,14Z)-eicosatetraenoyl-N-(acetyl)-sphing-4-enine + 1-hexadecanoyl-sn-glycero-3-phosphoethanolamine. The catalysed reaction is N-(acetyl)-sphing-4-enine + a 1,2-diacyl-sn-glycero-3-phosphocholine = 1-O-acyl-N-(acetyl)-sphing-4-enine + a 2-acyl-sn-glycero-3-phosphocholine. It catalyses the reaction 1-hexadecanoyl-2-(9Z-octadecenoyl)-sn-glycero-3-phosphocholine + N-(acetyl)-sphing-4-enine = 1-hexadecanoyl-N-(acetyl)-sphing-4-enine + 2-(9Z-octadecenoyl)-sn-glycero-3-phosphocholine. The enzyme catalyses 1-hexadecanoyl-2-(9Z,12Z-octadecadienoyl)-sn-glycero-3-phosphocholine + N-(acetyl)-sphing-4-enine = 2-(9Z,12Z-octadecadienoyl)-sn-glycero-3-phosphocholine + 1-hexadecanoyl-N-(acetyl)-sphing-4-enine. It carries out the reaction 1-hexadecanoyl-2-(5Z,8Z,11Z,14Z-eicosatetraenoyl)-sn-glycero-3-phosphocholine + N-(acetyl)-sphing-4-enine = 1-hexadecanoyl-N-(acetyl)-sphing-4-enine + 2-(5Z,8Z,11Z,14Z)-eicosatetraenoyl-sn-glycero-3-phosphocholine. The catalysed reaction is 1-hexadecanoyl-2-(4Z,7Z,10Z,13Z,16Z,19Z-docosahexaenoyl)-sn-glycero-3-phosphocholine + N-(acetyl)-sphing-4-enine = 2-(4Z,7Z,10Z,13Z,16Z,19Z-docosahexaenoyl)-sn-glycero-3-phosphocholine + 1-hexadecanoyl-N-(acetyl)-sphing-4-enine. It catalyses the reaction 1-hexadecanoyl-2-nonadioyl-sn-glycero-3-phosphocholine + N-(acetyl)-sphing-4-enine = 2-nonadioyl-sn-glycero-3-phosphocholine + 1-hexadecanoyl-N-(acetyl)-sphing-4-enine. The enzyme catalyses 1-octadecanoyl-2-(9Z-octadecenoyl)-sn-glycero-3-phosphocholine + N-(acetyl)-sphing-4-enine = 1-octadecanoyl-N-(acetyl)-sphing-4-enine + 2-(9Z-octadecenoyl)-sn-glycero-3-phosphocholine. It carries out the reaction 1-(9Z)-octadecenoyl-2-octadecanoyl-sn-glycero-3-phosphocholine + N-(acetyl)-sphing-4-enine = 2-octadecanoyl-sn-glycero-3-phosphocholine + 1-(9Z-octadecenoyl)-N-(acetyl)-sphing-4-enine. The catalysed reaction is 1-octadecanoyl-2-(5Z,8Z,11Z,14Z-eicosatetraenoyl)-sn-glycero-3-phosphocholine + N-(acetyl)-sphing-4-enine = 1-octadecanoyl-N-(acetyl)-sphing-4-enine + 2-(5Z,8Z,11Z,14Z)-eicosatetraenoyl-sn-glycero-3-phosphocholine. It catalyses the reaction 1-(9Z-octadecenoyl)-2-hexadecanoyl-sn-glycero-3-phosphocholine + N-(acetyl)-sphing-4-enine = 1-(9Z-octadecenoyl)-N-(acetyl)-sphing-4-enine + 2-hexadecanoyl-sn-glycero-3-phosphocholine. The enzyme catalyses N-(acetyl)-sphing-4-enine + a 1,2-diacyl-sn-glycero-3-phosphocholine = 1-O-acyl-N-(acetyl)-sphing-4-enine + a 1-acyl-sn-glycero-3-phosphocholine. It carries out the reaction 1-hexadecanoyl-2-(9Z-octadecenoyl)-sn-glycero-3-phosphocholine + N-(acetyl)-sphing-4-enine = 1-(9Z-octadecenoyl)-N-(acetyl)-sphing-4-enine + 1-hexadecanoyl-sn-glycero-3-phosphocholine. The catalysed reaction is 1-hexadecanoyl-2-(9Z,12Z-octadecadienoyl)-sn-glycero-3-phosphocholine + N-(acetyl)-sphing-4-enine = 1-(9Z,12Z-octadecadienoyl)-N-acetylsphing-4-enine + 1-hexadecanoyl-sn-glycero-3-phosphocholine. It catalyses the reaction 1-hexadecanoyl-2-(5Z,8Z,11Z,14Z-eicosatetraenoyl)-sn-glycero-3-phosphocholine + N-(acetyl)-sphing-4-enine = 1-(5Z,8Z,11Z,14Z)-eicosatetraenoyl-N-(acetyl)-sphing-4-enine + 1-hexadecanoyl-sn-glycero-3-phosphocholine. The enzyme catalyses 1-hexadecanoyl-2-(4Z,7Z,10Z,13Z,16Z,19Z-docosahexaenoyl)-sn-glycero-3-phosphocholine + N-(acetyl)-sphing-4-enine = 1-(4Z,7Z,10Z,13Z,16Z,19Z-docosahexaenoyl)-N-(acetyl)-sphing-4-enine + 1-hexadecanoyl-sn-glycero-3-phosphocholine. It carries out the reaction 1-octadecanoyl-2-(9Z-octadecenoyl)-sn-glycero-3-phosphocholine + N-(acetyl)-sphing-4-enine = 1-(9Z-octadecenoyl)-N-(acetyl)-sphing-4-enine + 1-octadecanoyl-sn-glycero-3-phosphocholine. The catalysed reaction is 1-octadecanoyl-2-(9Z,12Z)-octadecadienoyl-sn-glycero-3-phosphocholine + N-(acetyl)-sphing-4-enine = 1-(9Z,12Z-octadecadienoyl)-N-acetylsphing-4-enine + 1-octadecanoyl-sn-glycero-3-phosphocholine. It catalyses the reaction 1-(9Z-octadecenoyl)-2-hexadecanoyl-sn-glycero-3-phosphocholine + N-(acetyl)-sphing-4-enine = 1-hexadecanoyl-N-(acetyl)-sphing-4-enine + 1-(9Z-octadecenoyl)-sn-glycero-3-phosphocholine. The enzyme catalyses 1-(9Z)-octadecenoyl-2-octadecanoyl-sn-glycero-3-phosphocholine + N-(acetyl)-sphing-4-enine = 1-octadecanoyl-N-(acetyl)-sphing-4-enine + 1-(9Z-octadecenoyl)-sn-glycero-3-phosphocholine. It carries out the reaction 1,2-di-(9Z-octadecenoyl)-sn-glycero-3-phosphocholine + N-(acetyl)-sphing-4-enine = 1-(9Z-octadecenoyl)-N-(acetyl)-sphing-4-enine + 1-(9Z-octadecenoyl)-sn-glycero-3-phosphocholine. The catalysed reaction is 1-octadecanoyl-2-(5Z,8Z,11Z,14Z-eicosatetraenoyl)-sn-glycero-3-phosphocholine + N-(acetyl)-sphing-4-enine = 1-(5Z,8Z,11Z,14Z)-eicosatetraenoyl-N-(acetyl)-sphing-4-enine + 1-octadecanoyl-sn-glycero-3-phosphocholine. It catalyses the reaction a 1,2-diacyl-sn-glycero-3-phospho-L-serine + N-(acetyl)-sphing-4-enine = a 2-acyl-sn-glycero-3-phospho-L-serine + 1-O-acyl-N-(acetyl)-sphing-4-enine. The enzyme catalyses 1-octadecanoyl-2-(9Z-octadecenoyl)-sn-glycero-3-phospho-L-serine + N-(acetyl)-sphing-4-enine = 2-(9Z-octadecenoyl)-sn-glycero-3-phospho-L-serine + 1-octadecanoyl-N-(acetyl)-sphing-4-enine. It carries out the reaction a 1,2-diacyl-sn-glycero-3-phospho-L-serine + N-(acetyl)-sphing-4-enine = 1-O-acyl-N-(acetyl)-sphing-4-enine + a 1-acyl-sn-glycero-3-phospho-L-serine. The catalysed reaction is 1-octadecanoyl-2-(9Z-octadecenoyl)-sn-glycero-3-phospho-L-serine + N-(acetyl)-sphing-4-enine = 1-octadecanoyl-sn-glycero-3-phosphoserine + 1-(9Z-octadecenoyl)-N-(acetyl)-sphing-4-enine. It catalyses the reaction a 1,2-diacyl-sn-glycero-3-phospho-(1'-sn-glycerol) + N-(acetyl)-sphing-4-enine = 2-acyl-sn-glycero-3-phospho-(1'-sn-glycerol) + 1-O-acyl-N-(acetyl)-sphing-4-enine. The enzyme catalyses 1-octadecanoyl-2-(9Z-octadecenoyl)-sn-glycero-3-phospho-(1'-sn-glycerol) + N-(acetyl)-sphing-4-enine = 2-(9Z-octadecenoyl)-sn-glycero-3-phospho-(1'-sn-glycerol) + 1-octadecanoyl-N-(acetyl)-sphing-4-enine. It carries out the reaction a 1,2-diacyl-sn-glycero-3-phospho-(1'-sn-glycerol) + N-(acetyl)-sphing-4-enine = 1-O-acyl-N-(acetyl)-sphing-4-enine + 1-acyl-sn-glycero-3-phospho-(1'-sn-glycerol). The catalysed reaction is 1-octadecanoyl-2-(9Z-octadecenoyl)-sn-glycero-3-phospho-(1'-sn-glycerol) + N-(acetyl)-sphing-4-enine = 1-octadecanoyl-sn-glycero-3-phospho-(1'-sn-glycerol) + 1-(9Z-octadecenoyl)-N-(acetyl)-sphing-4-enine. It catalyses the reaction an N-acylethanolamine + a 1,2-diacyl-sn-glycero-3-phosphocholine = 2-(acylamino)ethyl fatty acid + a 2-acyl-sn-glycero-3-phosphocholine. The enzyme catalyses an N-acylethanolamine + a 1,2-diacyl-sn-glycero-3-phosphocholine = 2-(acylamino)ethyl fatty acid + a 1-acyl-sn-glycero-3-phosphocholine. It carries out the reaction N-(5Z,8Z,11Z,14Z-eicosatetraenoyl)-ethanolamine + 1,2-di-(9Z-octadecenoyl)-sn-glycero-3-phosphocholine = 2-[(5Z,8Z,11Z,14Z)-eicosatetraenoylamino]ethyl (9Z)-octadecenoate + (9Z-octadecenoyl)-sn-glycero-3-phosphocholine. The catalysed reaction is N-(9Z-octadecenoyl) ethanolamine + 1,2-di-(9Z-octadecenoyl)-sn-glycero-3-phosphocholine = 2-[(9Z)-octadecenoylamino]ethyl (9Z)-octadecenoate + (9Z-octadecenoyl)-sn-glycero-3-phosphocholine. It catalyses the reaction a 3-acyl-sn-glycerol + a 1,2-diacyl-sn-glycero-3-phosphocholine = a 1,3-diacylglycerol + a 1-acyl-sn-glycero-3-phosphocholine. The enzyme catalyses a 3-acyl-sn-glycerol + a 1,2-diacyl-sn-glycero-3-phosphocholine = a 1,3-diacylglycerol + a 2-acyl-sn-glycero-3-phosphocholine. It carries out the reaction 3-(9Z-octadecenoyl)-sn-glycerol + 1,2-di-(9Z-octadecenoyl)-sn-glycero-3-phosphocholine = 1,3-di-(9Z-octadecenoyl)-glycerol + (9Z-octadecenoyl)-sn-glycero-3-phosphocholine. The catalysed reaction is 3-hexadecanoyl-sn-glycerol + 1,2-di-(9Z-octadecenoyl)-sn-glycero-3-phosphocholine = 1-(9Z)-octadecenoyl-3-hexadecanoyl-sn-glycerol + (9Z-octadecenoyl)-sn-glycero-3-phosphocholine. It catalyses the reaction a 1-acyl-sn-glycerol + a 1,2-diacyl-sn-glycero-3-phosphocholine = a 1,3-diacylglycerol + a 2-acyl-sn-glycero-3-phosphocholine. The enzyme catalyses a 1-acyl-sn-glycerol + a 1,2-diacyl-sn-glycero-3-phosphocholine = a 1,3-diacylglycerol + a 1-acyl-sn-glycero-3-phosphocholine. It carries out the reaction 1-(9Z-octadecenoyl)-sn-glycerol + 1,2-di-(9Z-octadecenoyl)-sn-glycero-3-phosphocholine = 1,3-di-(9Z-octadecenoyl)-glycerol + (9Z-octadecenoyl)-sn-glycero-3-phosphocholine. The catalysed reaction is 1-hexadecanoyl-sn-glycerol + 1,2-di-(9Z-octadecenoyl)-sn-glycero-3-phosphocholine = 1-hexadecanoyl-3-(9Z)-octadecenoyl-sn-glycerol + (9Z-octadecenoyl)-sn-glycero-3-phosphocholine. It catalyses the reaction a 2-acylglycerol + a 1,2-diacyl-sn-glycero-3-phosphocholine = a 1,2-diacylglycerol + a 2-acyl-sn-glycero-3-phosphocholine. The enzyme catalyses a 2-acylglycerol + a 1,2-diacyl-sn-glycero-3-phosphocholine = a 1,2-diacylglycerol + a 1-acyl-sn-glycero-3-phosphocholine. It carries out the reaction 2-hexadecanoylglycerol + 1,2-di-(9Z-octadecenoyl)-sn-glycero-3-phosphocholine = 1-(9Z)-octadecenoyl-2-hexadecanoylglycerol + (9Z-octadecenoyl)-sn-glycero-3-phosphocholine. The catalysed reaction is 1-O-alkylglycerol + a 1,2-diacyl-sn-glycero-3-phosphocholine = 1-O-alkyl-3-acylglycerol + a 1-acyl-sn-glycero-3-phosphocholine. It catalyses the reaction 1-O-alkylglycerol + a 1,2-diacyl-sn-glycero-3-phosphocholine = 1-O-alkyl-3-acylglycerol + a 2-acyl-sn-glycero-3-phosphocholine. The enzyme catalyses 1-O-hexadecylglycerol + 1,2-di-(9Z-octadecenoyl)-sn-glycero-3-phosphocholine = 1-O-hexadecyl-3-(9Z)-octadecenoylglycerol + (9Z-octadecenoyl)-sn-glycero-3-phosphocholine. It carries out the reaction 1-O-alkyl-2-acyl-sn-glycerol + a 1,2-diacyl-sn-glycero-3-phosphocholine = 1-O-alkyl-2,3-diacyl-sn-glycerol + a 2-acyl-sn-glycero-3-phosphocholine. The catalysed reaction is 1-O-alkyl-2-acyl-sn-glycerol + a 1,2-diacyl-sn-glycero-3-phosphocholine = 1-O-alkyl-2,3-diacyl-sn-glycerol + a 1-acyl-sn-glycero-3-phosphocholine. It catalyses the reaction 1-O-hexadecyl-2-acetyl-sn-glycerol + 1,2-di-(9Z-octadecenoyl)-sn-glycero-3-phosphocholine = 1-O-hexadecyl-2-acetyl-3-(9Z)-octadecenoyl-sn-glycerol + (9Z-octadecenoyl)-sn-glycero-3-phosphocholine. The enzyme catalyses 1-O-hexadecyl-2-O-methyl-sn-glycerol + 1,2-di-(9Z-octadecenoyl)-sn-glycero-3-phosphocholine = 1-O-hexadecyl-2-O-methyl-3-(9Z)-octadecenoyl-sn-glycerol + (9Z-octadecenoyl)-sn-glycero-3-phosphocholine. It carries out the reaction a 1,2-diacyl-sn-glycero-3-phosphoethanolamine + H2O = a 1-acyl-sn-glycero-3-phosphoethanolamine + a fatty acid + H(+). The catalysed reaction is 1-acyl-2-(5Z,8Z,11Z,14Z)-eicosatetraenoyl-sn-glycero-3-phosphoethanolamine + H2O = a 1-acyl-sn-glycero-3-phosphoethanolamine + (5Z,8Z,11Z,14Z)-eicosatetraenoate + H(+). It catalyses the reaction a 1,2-diacyl-sn-glycero-3-phospho-(1'-sn-glycerol) + H2O = 1-acyl-sn-glycero-3-phospho-(1'-sn-glycerol) + a fatty acid + H(+). The enzyme catalyses 1-hexadecanoyl-2-(9Z-octadecenoyl)-sn-glycero-3-phospho-(1'-sn-glycerol) + H2O = 1-hexadecanoyl-sn-glycero-3-phospho-(1'-sn-glycerol) + (9Z)-octadecenoate + H(+). It carries out the reaction a 1,2-diacyl-sn-glycero-3-phospho-(1'-sn-glycerol) + H2O = 2-acyl-sn-glycero-3-phospho-(1'-sn-glycerol) + a fatty acid + H(+). The catalysed reaction is 1-hexadecanoyl-2-(9Z-octadecenoyl)-sn-glycero-3-phospho-(1'-sn-glycerol) + H2O = 2-(9Z-octadecenoyl)-sn-glycero-3-phospho-(1'-sn-glycerol) + hexadecanoate + H(+). Transacylase activity is completely inhibited by Triton X-100 and partially inhibited by heparin. Moderately activated by Mg(2+) and Ca(2+). Has dual calcium-independent phospholipase and O-acyltransferase activities with a potential role in glycerophospholipid homeostasis and remodeling of acyl groups of lipophilic alcohols present in acidic cellular compartments. Catalyzes hydrolysis of the ester bond of the fatty acyl group attached at sn-1 or sn-2 position of phospholipids (phospholipase A1 or A2 activity) and transfer it to the hydroxyl group at the first carbon of lipophilic alcohols (O-acyltransferase activity). Among preferred fatty acyl donors are phosphatidylcholines, phosphatidylethanolamines, phosphatidylglycerols and phosphatidylserines. Favors sn-2 over sn-1 deacylation of unsaturated fatty acyl groups of phosphatidylcholines, phosphatidylethanolamines, and phosphatidylglycerols. Among preferred fatty acyl acceptors are natural lipophilic alcohols including short-chain ceramide N-acetyl-sphingosine (C2 ceramide), alkylacylglycerols, monoacylglycerols, and acylethanolamides such as anandamide and oleoylethanolamide. Selectively hydrolyzes the sn-1 fatty acyl group of truncated oxidized phospholipids and may play a role in detoxification of reactive oxidized phospholipids during oxidative stress. Required for normal phospholipid degradation in alveolar macrophages with potential implications in the clearance of pulmonary surfactant, which is mainly composed of dipalmitoylphosphatidylcholine (1,2-dihexadecanoyl-sn-glycero-3-phosphocholine). Involved in the first step of bis(monoacylglycero)phosphate (BMP) de novo synthesis from phosphatidylglycerol (1,2-diacyl-sn-glycero-3-phospho-(1'-sn-glycerol), PG). BMP is an important player in cargo sorting and degradation, regulation of cellular cholesterol levels and intercellular communication. At neutral pH, hydrolyzes the sn-1 fatty acyl group of the lysophosphatidylcholines. The sequence is that of Lysosomal phospholipase A and acyltransferase (PLA2G15) from Bos taurus (Bovine).